We begin with the raw amino-acid sequence, 116 residues long: Ly-6/neurotoxin-like protein 1 (116 aa).

Residues 1-20 (MTPLLTLILVVLMGLPLAQA) form the signal peptide. The UPAR/Ly6 domain occupies 21–107 (LDCHVCAYNG…TPATLALAPI (87 aa)). 5 cysteine pairs are disulfide-bonded: C23-C46, C26-C33, C39-C64, C68-C85, and C86-C91. A lipid anchor (GPI-anchor amidated cysteine) is attached at C91. Residues 92 to 116 (NGTGLATPATLALAPILLATLWGLL) constitute a propeptide, removed in mature form.

Interacts with nAChRs containing alpha-4:beta-2 (CHRNA4:CHRNB2) and alpha-7 (CHRNA7) subunits. Interacts with CHRNA4 probably in the endoplasmic reticulum prior to nAChR pentameric assembly. Interacts with KCNA2/Potassium voltage-gated channel subfamily A member 2.

It localises to the cell membrane. Its subcellular location is the cell projection. It is found in the dendrite. The protein localises to the endoplasmic reticulum. Acts in different tissues through interaction to nicotinic acetylcholine receptors (nAChRs). The proposed role as modulator of nAChR activity seems to be dependent on the nAChR subtype and stoichiometry, and to involve an effect on nAChR trafficking and its cell surface expression, and on single channel properties of the nAChR inserted in the plasma membrane. Modulates functional properties of nicotinic acetylcholine receptors (nAChRs) to prevent excessive excitation, and hence neurodegeneration. Enhances desensitization by increasing both the rate and extent of desensitization of alpha-4:beta-2-containing nAChRs and slowing recovery from desensitization. Promotes large amplitude ACh-evoked currents through alpha-4:beta-2 nAChRs. Is involved in regulation of the nAChR pentameric assembly in the endoplasmic reticulum. Shifts stoichiometry from high sensitivity alpha-4(2):beta-2(3) to low sensitivity alpha-4(3):beta-2(2) nAChR. In vitro modulates alpha-3:beta-4-containing nAChRs. Reduces cell surface expression of (alpha-3:beta-4)(2):beta-4 and (alpha-3:beta-4)(2):alpha-5 nAChRs suggesting an interaction with nAChR alpha-3(-):(+)beta-4 subunit interfaces and an allosteric mode. Corresponding single channel effects characterized by decreased unitary conductance, altered burst proportions and enhanced desensitization/inactivation seem to depend on nAChR alpha:alpha subunit interfaces and are greater in (alpha-3:beta-2)(2):alpha-3 when compared to (alpha-3:beta-2)(2):alpha-5 nAChRs. Prevents plasticity in the primary visual cortex late in life. This is Ly-6/neurotoxin-like protein 1 from Homo sapiens (Human).